Consider the following 275-residue polypeptide: Large ribosomal subunit protein uL2 (275 aa).

The segment covering 28–38 (EPYAPLLDKKS) has biased composition (basic and acidic residues). 2 disordered regions span residues 28-55 (EPYAPLLDKKSKSGGRNNTGRITTRHVG) and 224-258 (AMNPVDHPHGGGEGRTSGGRHPVSPWGIPTKGYKT).

It belongs to the universal ribosomal protein uL2 family. As to quaternary structure, part of the 50S ribosomal subunit. Forms a bridge to the 30S subunit in the 70S ribosome.

Its function is as follows. One of the primary rRNA binding proteins. Required for association of the 30S and 50S subunits to form the 70S ribosome, for tRNA binding and peptide bond formation. It has been suggested to have peptidyltransferase activity; this is somewhat controversial. Makes several contacts with the 16S rRNA in the 70S ribosome. This is Large ribosomal subunit protein uL2 from Cellvibrio japonicus (strain Ueda107) (Pseudomonas fluorescens subsp. cellulosa).